The sequence spans 1151 residues: MFNQEKGTDYPILNIQELEALADLKLSAMGKEYPKHDKSDAIDVVAPLVDIIAEGDQESTAPIDARLQTFLNSYFAECGEEVPKIPDNTFILDREGLGRVLSFPPHKQEFFCETMKSYKIKQGVLHNPAKDKRTTVGVFHICQSDVPVPADKIECPKIAFLRMLKAAFYGAPDDHLIIPYTAECKEPTRSWVSLYMRPVVVPGVKGVKGFEHEKATEMHFFVPGNMVSCLDFVESVFGNAGNPRLSKNDAALDPLGWTGHSGMAILAPHLTRMTKKECGLPHISQATERQKRERMCWEKEDELYNDGKTFKMYCRDASGVICTIIADNYFGYCKKEVKTQISYSANLYGFAEEEHAGGAVTRPSYDLGEACKAVQYAEGYKFSEMVEKNKHSIIVKEEGYAVDKKYPEGIIYVPEDSVFTIEDASIKFNHNGKEESILLTPKVNYVLPNGYTIILHDTMTSRRWTLRGILPQYTLCHKPCTVSGGGKSEISKNISDAIFEGKMFVNNKEEEFKAVQKVFDHDFSRRYADGEIKSAHILDPNVTLGTVVKMLTPSSFFTEEHNEFVAAIPPMIVELALTIKSLYREEWKGDWQSRITVDKINGKEGHELKYRKMPLPSQYLRVGFERDETTWRVFQLRKDFFPAAKLQMEDDITASVIVPTKLLKTPINTNGKKACKIVKNCELRLFQRPDDAVFRGYDKQTEYDFSIPGHFISNYQPMTREEAKDFTKDVVRLYQYTEPMRKCLQDFVAGKDEAKYIVSSSHTRLVQDGDKLVGSKNPRYLQRRPDMLDPEYTYMTFKAIQLFRKISDEEPLYTPVDAVLSGRRNNPPQVAKNGMKLRPLSVFAPLHYFELPELLMECITSMTGASPSMFGAGSEGALTKGPFNSLPAVVDLNNYLLGMICCGYSGFVSSASYCGPHYKVAHDISLLIPEIWSRMRRYEQEPKYLIEHGYLEPCPDVTYNGKTYSGKRLGYRITKDFTVHYFSSIFSVPNSVMPEDFLKPELQDLAIYADSYEYIEQTDKGIAMNYVKDGTVEGACPPLKALIYIMANGEYNGMTRESKEFREMFDAKTILNSEWYKERLVTRQKLEVAKLNKDLAYLNKTIAEKPRLAETLNKQIAAVKEELQYVSSEEYLIDIDGSIGTDPYPYKCMKH.

The stretch at 1083–1129 (RQKLEVAKLNKDLAYLNKTIAEKPRLAETLNKQIAAVKEELQYVSSE) forms a coiled coil.

The protein belongs to the PPi-type phosphoenolpyruvate carboxykinase family. As to quaternary structure, monomer and trimer; forms heterotrimers with PEPCK2 and PEPCK3.

The protein localises to the cytoplasm. It is found in the cytosol. It catalyses the reaction oxaloacetate + diphosphate = phosphoenolpyruvate + phosphate + CO2. Its function is as follows. Inorganic pyrophosphate (PPi)-dependent phosphoenolpyruvate carboxykinase, which regulates the carbon flow of the central metabolism by fixing CO(2) to phosphoenolpyruvate to produce oxaloacetate. Can also produce pyruvate and diphosphate from phosphoenolpyruvate and phosphate. The chain is PPi-type phosphoenolpyruvate carboxykinase 1 from Entamoeba histolytica (strain ATCC 30459 / HM-1:IMSS / ABRM).